Reading from the N-terminus, the 310-residue chain is Porphobilinogen deaminase (310 aa).

S-(dipyrrolylmethanemethyl)cysteine is present on Cys-236.

It belongs to the HMBS family. Monomer. Dipyrromethane serves as cofactor.

It catalyses the reaction 4 porphobilinogen + H2O = hydroxymethylbilane + 4 NH4(+). It participates in porphyrin-containing compound metabolism; protoporphyrin-IX biosynthesis; coproporphyrinogen-III from 5-aminolevulinate: step 2/4. Its function is as follows. Tetrapolymerization of the monopyrrole PBG into the hydroxymethylbilane pre-uroporphyrinogen in several discrete steps. This chain is Porphobilinogen deaminase, found in Nitratiruptor sp. (strain SB155-2).